The chain runs to 626 residues: tRNA uridine 5-carboxymethylaminomethyl modification enzyme MnmG (626 aa).

13–18 contacts FAD; sequence GGGHAG. Residue 273–287 participates in NAD(+) binding; that stretch reads GPRYCPSIEDKIHRF.

The protein belongs to the MnmG family. In terms of assembly, homodimer. Heterotetramer of two MnmE and two MnmG subunits. The cofactor is FAD.

It localises to the cytoplasm. NAD-binding protein involved in the addition of a carboxymethylaminomethyl (cmnm) group at the wobble position (U34) of certain tRNAs, forming tRNA-cmnm(5)s(2)U34. This chain is tRNA uridine 5-carboxymethylaminomethyl modification enzyme MnmG, found in Acinetobacter baumannii (strain AB307-0294).